Reading from the N-terminus, the 294-residue chain is tRNA pseudouridine synthase B (294 aa).

Residue aspartate 38 is the Nucleophile of the active site.

It belongs to the pseudouridine synthase TruB family. Type 1 subfamily.

It carries out the reaction uridine(55) in tRNA = pseudouridine(55) in tRNA. Its function is as follows. Responsible for synthesis of pseudouridine from uracil-55 in the psi GC loop of transfer RNAs. The polypeptide is tRNA pseudouridine synthase B (Clostridium perfringens (strain ATCC 13124 / DSM 756 / JCM 1290 / NCIMB 6125 / NCTC 8237 / Type A)).